We begin with the raw amino-acid sequence, 284 residues long: Shikimate dehydrogenase (NADP(+)) (284 aa).

Shikimate contacts are provided by residues 20–22 (SIS) and Ser-67. The Proton acceptor role is filled by Lys-71. Shikimate-binding residues include Asn-92 and Asp-107. NADP(+) is bound by residues 129–133 (GAGGA) and Val-227. Shikimate is bound at residue Tyr-229. NADP(+) is bound at residue Gly-250.

It belongs to the shikimate dehydrogenase family. Homodimer.

It carries out the reaction shikimate + NADP(+) = 3-dehydroshikimate + NADPH + H(+). Its pathway is metabolic intermediate biosynthesis; chorismate biosynthesis; chorismate from D-erythrose 4-phosphate and phosphoenolpyruvate: step 4/7. Its function is as follows. Involved in the biosynthesis of the chorismate, which leads to the biosynthesis of aromatic amino acids. Catalyzes the reversible NADPH linked reduction of 3-dehydroshikimate (DHSA) to yield shikimate (SA). The sequence is that of Shikimate dehydrogenase (NADP(+)) from Streptococcus sanguinis (strain SK36).